The sequence spans 141 residues: Hemoglobin subunit alpha (141 aa).

In terms of domain architecture, Globin spans 1–141 (VLSSKDKANI…VSTVLTSKYR (141 aa)). Phosphoserine is present on Ser-3. N6-succinyllysine occurs at positions 7 and 11. An N6-acetyllysine; alternate modification is found at Lys-16. At Lys-16 the chain carries N6-succinyllysine; alternate. At Tyr-24 the chain carries Phosphotyrosine. Position 40 is an N6-succinyllysine (Lys-40). At Ser-49 the chain carries Phosphoserine. Position 58 (His-58) interacts with O2. Position 87 (His-87) interacts with heme b. Ser-102 carries the phosphoserine modification. Thr-108 carries the post-translational modification Phosphothreonine. Ser-124 is subject to Phosphoserine. A phosphothreonine mark is found at Thr-134 and Thr-137. Phosphoserine is present on Ser-138.

This sequence belongs to the globin family. As to quaternary structure, heterotetramer of two alpha chains and two beta chains. As to expression, red blood cells.

Functionally, involved in oxygen transport from the lung to the various peripheral tissues. In terms of biological role, hemopressin acts as an antagonist peptide of the cannabinoid receptor CNR1. Hemopressin-binding efficiently blocks cannabinoid receptor CNR1 and subsequent signaling. The sequence is that of Hemoglobin subunit alpha (HBA) from Vicugna pacos (Alpaca).